Consider the following 374-residue polypeptide: MTVSHGGILEGSSRGGKMMDWLKNKKAISPILALLIVLGVTIVVGAVFYAWGSNLFGNSQEKTQAAVEGTATNMFYDAGAIRVAATCIDKIRYQDADDSDSWLGYPNGNGKIAKPSTSNGCYNSTYGTVFYDERFIVEIPVTIDTQDYKLTGVKVVGGIPKIVDMGGTYTNAFEDISAKFYAFWLHLNDNYQLLKKDGTLFVGYVNKSGMFEVSNGYVIAWNQTRDTYGKLASSVGATSDSSWDAVNTTTGVAPLVETSWPYYGTYCSNVKLYTATGEELKPGFGSGTLVAQWFCSSATYLDKLFNNPEYVVGTLPKNSEKTVKTYLFFNTLYLPNYKGSTNDGYVTFEVPLKVVSNEGVTKEVKVKFTVYDDE.

The helical transmembrane segment at 27 to 49 (AISPILALLIVLGVTIVVGAVFY) threads the bilayer.

The protein localises to the membrane. This is an uncharacterized protein from Methanocaldococcus jannaschii (strain ATCC 43067 / DSM 2661 / JAL-1 / JCM 10045 / NBRC 100440) (Methanococcus jannaschii).